Here is a 365-residue protein sequence, read N- to C-terminus: Mannose-1-phosphate guanylyltransferase catalytic subunit beta (365 aa).

The substrate-binding domain stretch occupies residues 2 to 221 (KALILVGGYG…PGFWMDVGQP (220 aa)). Aspartate 109 lines the GDP-alpha-D-mannose pocket. Aspartate 109 is a Mg(2+) binding site. Residue lysine 161 is part of the active site. Aspartate 217 is a GDP-alpha-D-mannose binding site. Aspartate 217 serves as a coordination point for Mg(2+). A hexapeptide repeat domain region spans residues 244–365 (ETGSNIHPTA…VNVPSKDIIM (122 aa)).

This sequence belongs to the transferase hexapeptide repeat family. In terms of assembly, component of the GMPPA-GMPPB mannose-1-phosphate guanylyltransferase complex composed of 4 GMPPA subunits and 8 tag-335/GMPPB subunits; the complex is organized into three layers, a central layer made up of 2 GMPPA dimers sandwiched between two layers each made up of 2 tag-335/GMPPB dimers. Catalytic activity of tag-335/GMPPB is reduced when part of the complex and binding of GDP-alpha-D-Mannose by GMPPA induces allosteric feedback inhibition of tag-335/GMPPB. Requires Mg(2+) as cofactor.

It catalyses the reaction alpha-D-mannose 1-phosphate + GTP + H(+) = GDP-alpha-D-mannose + diphosphate. The protein operates within nucleotide-sugar biosynthesis; GDP-alpha-D-mannose biosynthesis; GDP-alpha-D-mannose from alpha-D-mannose 1-phosphate (GTP route): step 1/1. Its activity is regulated as follows. Enzyme activity is reduced by incorporation into the GMPPA-GMPPB mannose-1-phosphate guanylyltransferase complex. Allosterically inhibited, when part of the GMPPA-GMPPB complex, by GDP-alpha-D-mannose binding to GMPPA. Functionally, catalytic subunit of the GMPPA-GMPPB mannose-1-phosphate guanylyltransferase complex. Catalyzes the formation of GDP-mannose, an essential precursor of glycan moieties of glycoproteins and glycolipids. Can catalyze the reverse reaction in vitro. Together with GMPPA regulates GDP-alpha-D-mannose levels. This chain is Mannose-1-phosphate guanylyltransferase catalytic subunit beta (tag-335), found in Caenorhabditis elegans.